Reading from the N-terminus, the 690-residue chain is Elongation factor G (690 aa).

The region spanning 8-283 (EDYRNFGIMA…AVVDYLPSPV (276 aa)) is the tr-type G domain. GTP is bound by residues 17-24 (AHIDAGKT), 81-85 (DTPGH), and 135-138 (NKMD).

This sequence belongs to the TRAFAC class translation factor GTPase superfamily. Classic translation factor GTPase family. EF-G/EF-2 subfamily.

The protein resides in the cytoplasm. Functionally, catalyzes the GTP-dependent ribosomal translocation step during translation elongation. During this step, the ribosome changes from the pre-translocational (PRE) to the post-translocational (POST) state as the newly formed A-site-bound peptidyl-tRNA and P-site-bound deacylated tRNA move to the P and E sites, respectively. Catalyzes the coordinated movement of the two tRNA molecules, the mRNA and conformational changes in the ribosome. The chain is Elongation factor G from Rhodopseudomonas palustris (strain BisB18).